We begin with the raw amino-acid sequence, 248 residues long: Type III pantothenate kinase (248 aa).

6–13 (DIGNTETK) is an ATP binding site. A substrate-binding site is contributed by 103–106 (GSDR). Aspartate 105 acts as the Proton acceptor in catalysis. Aspartate 124 is a binding site for K(+). Threonine 127 contacts ATP. Threonine 178 contacts substrate.

Belongs to the type III pantothenate kinase family. Homodimer. The cofactor is NH4(+). K(+) is required as a cofactor.

It localises to the cytoplasm. It carries out the reaction (R)-pantothenate + ATP = (R)-4'-phosphopantothenate + ADP + H(+). It functions in the pathway cofactor biosynthesis; coenzyme A biosynthesis; CoA from (R)-pantothenate: step 1/5. Its function is as follows. Catalyzes the phosphorylation of pantothenate (Pan), the first step in CoA biosynthesis. This is Type III pantothenate kinase from Pelagibacter ubique (strain HTCC1062).